Reading from the N-terminus, the 656-residue chain is Macrolide export ATP-binding/permease protein MacB (656 aa).

The 239-residue stretch at 6 to 244 (LEVSACYRSF…VKAQVDMSLA (239 aa)) folds into the ABC transporter domain. 42–49 (GASGSGKS) lines the ATP pocket. Helical transmembrane passes span 277-297 (FLTM…VALG), 531-551 (LLIS…VMNI), 586-606 (LVCL…GVVF), and 621-641 (SIVA…FLPA).

The protein belongs to the ABC transporter superfamily. Macrolide exporter (TC 3.A.1.122) family. As to quaternary structure, homodimer. Part of the tripartite efflux system MacAB-TolC, which is composed of an inner membrane transporter, MacB, a periplasmic membrane fusion protein, MacA, and an outer membrane component, TolC. The complex forms a large protein conduit and can translocate molecules across both the inner and outer membranes. Interacts with MacA.

It localises to the cell inner membrane. Functionally, part of the tripartite efflux system MacAB-TolC. MacB is a non-canonical ABC transporter that contains transmembrane domains (TMD), which form a pore in the inner membrane, and an ATP-binding domain (NBD), which is responsible for energy generation. Confers resistance against macrolides. This chain is Macrolide export ATP-binding/permease protein MacB, found in Shewanella oneidensis (strain ATCC 700550 / JCM 31522 / CIP 106686 / LMG 19005 / NCIMB 14063 / MR-1).